Here is a 295-residue protein sequence, read N- to C-terminus: Glycine--tRNA ligase alpha subunit (295 aa).

The protein belongs to the class-II aminoacyl-tRNA synthetase family. In terms of assembly, tetramer of two alpha and two beta subunits.

The protein resides in the cytoplasm. It catalyses the reaction tRNA(Gly) + glycine + ATP = glycyl-tRNA(Gly) + AMP + diphosphate. The sequence is that of Glycine--tRNA ligase alpha subunit from Rhodospirillum rubrum (strain ATCC 11170 / ATH 1.1.1 / DSM 467 / LMG 4362 / NCIMB 8255 / S1).